Here is a 355-residue protein sequence, read N- to C-terminus: Histidinol-phosphate aminotransferase 2 (355 aa).

The residue at position 210 (lysine 210) is an N6-(pyridoxal phosphate)lysine.

Belongs to the class-II pyridoxal-phosphate-dependent aminotransferase family. Histidinol-phosphate aminotransferase subfamily. In terms of assembly, homodimer. Pyridoxal 5'-phosphate serves as cofactor.

The catalysed reaction is L-histidinol phosphate + 2-oxoglutarate = 3-(imidazol-4-yl)-2-oxopropyl phosphate + L-glutamate. The protein operates within amino-acid biosynthesis; L-histidine biosynthesis; L-histidine from 5-phospho-alpha-D-ribose 1-diphosphate: step 7/9. The protein is Histidinol-phosphate aminotransferase 2 of Gluconobacter oxydans (strain 621H) (Gluconobacter suboxydans).